The primary structure comprises 331 residues: Inactive serine/threonine-protein kinase BKN1 (331 aa).

Residue Gly-2 is the site of N-myristoyl glycine attachment. Cys-4 carries the S-palmitoyl cysteine lipid modification. Residues 58–328 (DYSVRKFYKG…VLDGLNHIAE (271 aa)) enclose the Protein kinase domain.

It belongs to the protein kinase superfamily. Ser/Thr protein kinase family. In terms of tissue distribution, restricted to stigma in flowers.

Its subcellular location is the cell membrane. The protein resides in the nucleus. In terms of biological role, collaboratively with BKN2/SZE2, involved in compatible pollen-stigma interactions. This is Inactive serine/threonine-protein kinase BKN1 from Arabidopsis thaliana (Mouse-ear cress).